The sequence spans 289 residues: GTPase Era (289 aa).

Positions 2 to 167 (KSGFISLIGR…LDEIYKYLPE (166 aa)) constitute an Era-type G domain. A G1 region spans residues 10-17 (GRTNAGKS). 10 to 17 (GRTNAGKS) lines the GTP pocket. Residues 36–40 (NATRR) are G2. The tract at residues 57-60 (DTPG) is G3. Residues 57 to 61 (DTPGL) and 116 to 119 (TKID) each bind GTP. The interval 116–119 (TKID) is G4. Residues 146–148 (LSV) are G5. One can recognise a KH type-2 domain in the interval 198–274 (VSDEVPYSTD…FLKINVKIDK (77 aa)).

It belongs to the TRAFAC class TrmE-Era-EngA-EngB-Septin-like GTPase superfamily. Era GTPase family. As to quaternary structure, monomer.

The protein resides in the cytoplasm. Its subcellular location is the cell inner membrane. An essential GTPase that binds both GDP and GTP, with rapid nucleotide exchange. Plays a role in 16S rRNA processing and 30S ribosomal subunit biogenesis and possibly also in cell cycle regulation and energy metabolism. This Campylobacter fetus subsp. fetus (strain 82-40) protein is GTPase Era.